The chain runs to 457 residues: C4-dicarboxylate transport protein (457 aa).

7 consecutive transmembrane segments (helical) span residues 20–42, 51–73, 88–110, 138–158, 166–188, 212–234, and 241–263; these read LYFQ…PAFA, AFIK…TGIA, AMAY…AHVV, LTLV…AFTG, LTGP…LALV, ILMR…KYGV, and AWLV…GLVS.

This sequence belongs to the dicarboxylate/amino acid:cation symporter (DAACS) (TC 2.A.23) family.

It localises to the cell inner membrane. Functionally, responsible for the transport of dicarboxylates such as succinate, fumarate, and malate from the periplasm across the membrane. In Xanthomonas axonopodis pv. citri (strain 306), this protein is C4-dicarboxylate transport protein.